A 115-amino-acid polypeptide reads, in one-letter code: uncharacterized protein (115 aa).

2 consecutive transmembrane segments (helical) span residues 15 to 35 and 52 to 72; these read FSTQ…EVLF and FDGV…YYSI.

It is found in the membrane. This is an uncharacterized protein from Saccharomyces cerevisiae (strain ATCC 204508 / S288c) (Baker's yeast).